Here is a 528-residue protein sequence, read N- to C-terminus: GMP synthase [glutamine-hydrolyzing] (528 aa).

Residues 13–204 (SILILDFGSQ…VYSISKCKAD (192 aa)) enclose the Glutamine amidotransferase type-1 domain. Cysteine 90 acts as the Nucleophile in catalysis. Catalysis depends on residues histidine 178 and glutamate 180. The region spanning 205-403 (WNTETFLEET…LGLPDEIIKR (199 aa)) is the GMPS ATP-PPase domain. 232 to 238 (SGGVDSS) provides a ligand contact to ATP.

As to quaternary structure, homodimer.

It catalyses the reaction XMP + L-glutamine + ATP + H2O = GMP + L-glutamate + AMP + diphosphate + 2 H(+). The protein operates within purine metabolism; GMP biosynthesis; GMP from XMP (L-Gln route): step 1/1. Functionally, catalyzes the synthesis of GMP from XMP. The chain is GMP synthase [glutamine-hydrolyzing] from Prochlorococcus marinus (strain MIT 9515).